A 230-amino-acid chain; its full sequence is 8-demethylnovobiocic acid C(8)-methyltransferase (230 aa).

Belongs to the methyltransferase superfamily.

The enzyme catalyses 8-desmethylnovobiocic acid + S-adenosyl-L-methionine = novobiocic acid + S-adenosyl-L-homocysteine + H(+). Its pathway is antibiotic biosynthesis; novobiocin biosynthesis. C-methyltransferase that methylates 8-demethylnovobiocic acid to produce novobiocic acid in the novobiocin biosynthesis pathway. Novobiocin is an aminocoumarin family antibiotic that targets bacterial DNA gyrases. This Streptomyces niveus (Streptomyces spheroides) protein is 8-demethylnovobiocic acid C(8)-methyltransferase (novO).